The sequence spans 32 residues: Small ribosomal subunit protein uS19 (32 aa).

The protein belongs to the universal ribosomal protein uS19 family.

Functionally, protein S19 forms a complex with S13 that binds strongly to the 16S ribosomal RNA. The protein is Small ribosomal subunit protein uS19 (rpsS) of Yersinia enterocolitica.